The chain runs to 347 residues: UDP-3-O-acylglucosamine N-acyltransferase (347 aa).

H240 (proton acceptor) is an active-site residue.

This sequence belongs to the transferase hexapeptide repeat family. LpxD subfamily. As to quaternary structure, homotrimer.

The enzyme catalyses a UDP-3-O-[(3R)-3-hydroxyacyl]-alpha-D-glucosamine + a (3R)-hydroxyacyl-[ACP] = a UDP-2-N,3-O-bis[(3R)-3-hydroxyacyl]-alpha-D-glucosamine + holo-[ACP] + H(+). Its pathway is bacterial outer membrane biogenesis; LPS lipid A biosynthesis. Its function is as follows. Catalyzes the N-acylation of UDP-3-O-acylglucosamine using 3-hydroxyacyl-ACP as the acyl donor. Is involved in the biosynthesis of lipid A, a phosphorylated glycolipid that anchors the lipopolysaccharide to the outer membrane of the cell. This chain is UDP-3-O-acylglucosamine N-acyltransferase, found in Hydrogenovibrio crunogenus (strain DSM 25203 / XCL-2) (Thiomicrospira crunogena).